The sequence spans 166 residues: Cytochrome c-type biogenesis protein CcmE (166 aa).

Over 1–13 (MNFLPKSRKARRR) the chain is Cytoplasmic. The helical; Signal-anchor for type II membrane protein transmembrane segment at 14–34 (LTILAVAAPVVALAVGLALWG) threads the bilayer. Residues 35–166 (MRDAISLFYT…QGYKPGKPNT (132 aa)) are Periplasmic-facing. Positions 128 and 132 each coordinate heme. A disordered region spans residues 143 to 166 (EQGEWRGDGQAPSYQGYKPGKPNT).

Belongs to the CcmE/CycJ family.

Its subcellular location is the cell inner membrane. Its function is as follows. Heme chaperone required for the biogenesis of c-type cytochromes. Transiently binds heme delivered by CcmC and transfers the heme to apo-cytochromes in a process facilitated by CcmF and CcmH. This is Cytochrome c-type biogenesis protein CcmE from Caulobacter sp. (strain K31).